We begin with the raw amino-acid sequence, 142 residues long: MAAAAEGVPATRREEPPRDDAAVETAEEAKEPAEADINELCRDMFSKMATYLTGELTATSEDYKLLENMNKLTSLKYLEMKDIAINISRNLKDLNQKYAGLQPYLDQINVIEEQVAALEQAAYKLDAYSKKLEAKYKKLEKR.

Residues 1–33 (MAAAAEGVPATRREEPPRDDAAVETAEEAKEPA) form a disordered region. A2 bears the N-acetylalanine mark. The span at 11–33 (TRREEPPRDDAAVETAEEAKEPA) shows a compositional bias: basic and acidic residues. Positions 79–127 (EMKDIAINISRNLKDLNQKYAGLQPYLDQINVIEEQVAALEQAAYKLDA) form a coiled coil.

Belongs to the BLOC1S2 family. As to quaternary structure, component of the biogenesis of lysosome-related organelles complex 1 (BLOC-1) composed of BLOC1S1, BLOC1S2, BLOC1S3, BLOC1S4, BLOC1S5, BLOC1S6, DTNBP1/BLOC1S7 and SNAPIN/BLOC1S8. Octamer composed of one copy each BLOC1S1, BLOC1S2, BLOC1S3, BLOC1S4, BLOC1S5, BLOC1S6, DTNBP1/BLOC1S7 and SNAPIN/BLOC1S8. Interacts directly with BLOC1S1, BLOC1S3, BLOC1S4, BLOC1S5 and SNAPIN. The BLOC-1 complex associates with the AP-3 protein complex and membrane protein cargos. Component of the BLOC-one-related complex (BORC) which is composed of BLOC1S1, BLOC1S2, BORCS5, BORCS6, BORCS7, BORCS8, KXD1 and SNAPIN. Interacts with gamma-tubulin. Interacts with IFT57. Widely expressed. Highly expressed in most brain regions, spinal cord, kidney and ovary. In the brain, expressed in the frontal cortex and the superior thalamic radiation, with the strongest expression in the granule cells of hippocampal CA1, CA3 and dentate gyrus regions. In the spinal cord, mainly expressed in the gray matter. Expression level is high in laminae I-II and V-VI small sensory neurons in the dorsal horn, as well as in the large motor neurons of the ventral horn.

The protein resides in the cytoplasm. It localises to the cytoskeleton. Its subcellular location is the microtubule organizing center. The protein localises to the centrosome. It is found in the lysosome membrane. In terms of biological role, component of the BLOC-1 complex, a complex that is required for normal biogenesis of lysosome-related organelles (LRO), such as platelet dense granules and melanosomes. In concert with the AP-3 complex, the BLOC-1 complex is required to target membrane protein cargos into vesicles assembled at cell bodies for delivery into neurites and nerve terminals. The BLOC-1 complex, in association with SNARE proteins, is also proposed to be involved in neurite extension. As part of the BORC complex may play a role in lysosomes movement and localization at the cell periphery. Associated with the cytosolic face of lysosomes, the BORC complex may recruit ARL8B and couple lysosomes to microtubule plus-end-directed kinesin motor. May play a role in cell proliferation. The chain is Biogenesis of lysosome-related organelles complex-1 subunit 2 (Bloc1s2) from Rattus norvegicus (Rat).